An 88-amino-acid polypeptide reads, in one-letter code: UPF0297 protein SSA_2241 (88 aa).

Belongs to the UPF0297 family.

The sequence is that of UPF0297 protein SSA_2241 from Streptococcus sanguinis (strain SK36).